We begin with the raw amino-acid sequence, 204 residues long: MIILDNSIQTKKRTDSLSKLITVNTLGPEGTSSEYAAKHFISNFTLLQGLNSKLSLHDTFESCIERTLQSPLEYTIVPHAYDGIKHFYMRPDLQLLQIFRCDTPMYGLAVRPDFEFRDDMLDTSVIVSHPSPINLIKYFTRKDVRFKLVNSTSQAARKVKEGLYDIALTNELARQKYGLTFVKTFKSIPMSWSLFGKGDVDDEN.

Belongs to the prephenate decarboxylase family.

The protein localises to the cytoplasm. It carries out the reaction prephenate + H(+) = 3-[(4R)-4-hydroxycyclohexa-1,5-dien-1-yl]-2-oxopropanoate + CO2. It functions in the pathway antibiotic biosynthesis; bacilysin biosynthesis. Its function is as follows. Part of the bacABCDEF operon responsible for the biosynthesis of the nonribosomally synthesized dipeptide antibiotic bacilysin, composed of L-alanine and L-anticapsin. Bacilysin is an irreversible inactivator of the glutaminase domain of glucosamine synthetase. BacA is an unusual prephenate decarboxylase that avoids the typical aromatization of the cyclohexadienol ring of prephenate. BacA catalyzes the protonation of prephenate (1-carboxy-4-hydroxy-alpha-oxo-2,5-cyclohexadiene-1-propanoic acid) at C6 position, followed by a decarboxylation to produce the endocyclic-delta(4),delta(8)-7R-dihydro-hydroxyphenylpyruvate (en-H2HPP). En-H2HPP is able to undergo a slow nonenzymatic isomerization to produce the exocyclic-delta(3),delta(5)-dihydro-hydroxyphenylpyruvate (ex-H2HPP). BacA isomerizes only the pro-R double bond in prephenate. The protein is Prephenate decarboxylase of Bacillus subtilis (strain 168).